Consider the following 239-residue polypeptide: DNA repair protein RecO (239 aa).

The protein belongs to the RecO family.

Its function is as follows. Involved in DNA repair and RecF pathway recombination. This is DNA repair protein RecO from Tolumonas auensis (strain DSM 9187 / NBRC 110442 / TA 4).